A 102-amino-acid chain; its full sequence is Late embryogenesis abundant protein D-19 (102 aa).

Positions methionine 1–asparagine 102 are disordered. The segment covering glutamate 48–lysine 58 has biased composition (basic and acidic residues).

The protein belongs to the small hydrophilic plant seed protein family.

LEA proteins are late embryonic proteins abundant in higher plant seed embryos. There are two subsets of LEA proteins (5a and 5b), the first ones are expressed when the cotyledon weight reach 80 mg and the second set are expressed above 100 mg. The function of those proteins is not known. This Gossypium hirsutum (Upland cotton) protein is Late embryogenesis abundant protein D-19.